Reading from the N-terminus, the 343-residue chain is Uroporphyrinogen decarboxylase (343 aa).

Substrate is bound by residues 21–25 (RQAGR), Asp-71, Tyr-148, Ser-203, and His-316.

Belongs to the uroporphyrinogen decarboxylase family. In terms of assembly, homodimer.

Its subcellular location is the cytoplasm. The enzyme catalyses uroporphyrinogen III + 4 H(+) = coproporphyrinogen III + 4 CO2. Its pathway is porphyrin-containing compound metabolism; protoporphyrin-IX biosynthesis; coproporphyrinogen-III from 5-aminolevulinate: step 4/4. Its function is as follows. Catalyzes the decarboxylation of four acetate groups of uroporphyrinogen-III to yield coproporphyrinogen-III. The protein is Uroporphyrinogen decarboxylase of Campylobacter fetus subsp. fetus (strain 82-40).